Reading from the N-terminus, the 220-residue chain is UPF0319 protein Asuc_1002 (220 aa).

An N-terminal signal peptide occupies residues 1 to 21 (MKFRLAAVAAAALLASSASFA).

The protein belongs to the UPF0319 family.

In Actinobacillus succinogenes (strain ATCC 55618 / DSM 22257 / CCUG 43843 / 130Z), this protein is UPF0319 protein Asuc_1002.